A 238-amino-acid polypeptide reads, in one-letter code: Probable transcriptional regulatory protein SMU_1789c (238 aa).

The protein belongs to the TACO1 family. YeeN subfamily.

It is found in the cytoplasm. The sequence is that of Probable transcriptional regulatory protein SMU_1789c from Streptococcus mutans serotype c (strain ATCC 700610 / UA159).